A 256-amino-acid chain; its full sequence is UPF0246 protein PG_1544 (256 aa).

The protein belongs to the UPF0246 family.

The sequence is that of UPF0246 protein PG_1544 from Porphyromonas gingivalis (strain ATCC BAA-308 / W83).